The chain runs to 161 residues: MNSFRGRYTNKIDSKGRVSVPAKFRAVSIAQGLNGIICFPPLSEGKFIEGCGPAFSEEIDRMLDRLDPFSEERDMLASVLLGESAELMFDADGRVNLPDNLRELAGLTDEVVFVGAGPRFQIWEPGAYAAFAVEAQKRVPGFRELLKSTQASLRPEGGGGR.

SpoVT-AbrB domains are found at residues 7–55 (RYTN…GPAF) and 84–127 (SAEL…EPGA).

The protein belongs to the MraZ family. As to quaternary structure, forms oligomers.

It is found in the cytoplasm. The protein localises to the nucleoid. The protein is Transcriptional regulator MraZ of Parvibaculum lavamentivorans (strain DS-1 / DSM 13023 / NCIMB 13966).